The sequence spans 367 residues: Dual specificity protein phosphatase 1 (367 aa).

The Rhodanese domain maps to Gly20–Ser137. The Tyrosine-protein phosphatase domain maps to Gly173 to Ala314. The active-site Phosphocysteine intermediate is the Cys258. Ser359 and Ser364 each carry phosphoserine; by MAPK1 and MAPK3.

This sequence belongs to the protein-tyrosine phosphatase family. Non-receptor class dual specificity subfamily. Post-translationally, phosphorylation at Ser-359 and Ser-364 by MAPK1/ERK2 and MAPK3/ERK1 reduces its rate of degradation. In terms of processing, 'Lys-48'-linked polyubiquitinated by NEURL3, leading to proteasomal degradation.

Its subcellular location is the nucleus. The enzyme catalyses O-phospho-L-tyrosyl-[protein] + H2O = L-tyrosyl-[protein] + phosphate. It catalyses the reaction O-phospho-L-seryl-[protein] + H2O = L-seryl-[protein] + phosphate. It carries out the reaction O-phospho-L-threonyl-[protein] + H2O = L-threonyl-[protein] + phosphate. In terms of biological role, dual specificity phosphatase that dephosphorylates MAP kinase MAPK1/ERK2 on both 'Thr-183' and 'Tyr-185', regulating its activity during the meiotic cell cycle. This Mus musculus (Mouse) protein is Dual specificity protein phosphatase 1.